A 180-amino-acid chain; its full sequence is Large ribosomal subunit protein uL5 (180 aa).

It belongs to the universal ribosomal protein uL5 family. In terms of assembly, part of the 50S ribosomal subunit; part of the 5S rRNA/L5/L18/L25 subcomplex. Contacts the 5S rRNA and the P site tRNA. Forms a bridge to the 30S subunit in the 70S ribosome.

Functionally, this is one of the proteins that bind and probably mediate the attachment of the 5S RNA into the large ribosomal subunit, where it forms part of the central protuberance. In the 70S ribosome it contacts protein S13 of the 30S subunit (bridge B1b), connecting the 2 subunits; this bridge is implicated in subunit movement. Contacts the P site tRNA; the 5S rRNA and some of its associated proteins might help stabilize positioning of ribosome-bound tRNAs. In Lactobacillus helveticus (strain DPC 4571), this protein is Large ribosomal subunit protein uL5.